Reading from the N-terminus, the 231-residue chain is Somatolactin (231 aa).

Positions 1-24 (MNMMTVKQQGVWAALLWPYLLTAS) are cleaved as a signal peptide. 3 disulfides stabilise this stretch: Cys-29/Cys-39, Cys-89/Cys-205, and Cys-222/Cys-230. Asn-145 carries N-linked (GlcNAc...) asparagine glycosylation.

It belongs to the somatotropin/prolactin family. In terms of tissue distribution, pituitary gland.

It is found in the secreted. The sequence is that of Somatolactin from Paralichthys olivaceus (Bastard halibut).